The sequence spans 499 residues: Lanosterol 14-alpha demethylase (499 aa).

Residues 13–35 (SAVLQMSLTSVLLTASVFTLTLG) form a helical membrane-spanning segment. Cys-441 contributes to the heme binding site.

The protein belongs to the cytochrome P450 family. The cofactor is heme. As to expression, strongly expressed in intestine. Moderately expressed in liver, with higher levels in females compared to males. Also detected at low levels in brain, eye, kidney and testis.

The protein localises to the endoplasmic reticulum membrane. It is found in the membrane. The enzyme catalyses a 14alpha-methyl steroid + 3 reduced [NADPH--hemoprotein reductase] + 3 O2 = a Delta(14) steroid + formate + 3 oxidized [NADPH--hemoprotein reductase] + 4 H2O + 4 H(+). It catalyses the reaction lanosterol + 3 reduced [NADPH--hemoprotein reductase] + 3 O2 = 4,4-dimethyl-5alpha-cholesta-8,14,24-trien-3beta-ol + formate + 3 oxidized [NADPH--hemoprotein reductase] + 4 H2O + 4 H(+). It carries out the reaction 24,25-dihydrolanosterol + 3 reduced [NADPH--hemoprotein reductase] + 3 O2 = 4,4-dimethyl-8,14-cholestadien-3beta-ol + formate + 3 oxidized [NADPH--hemoprotein reductase] + 4 H2O + 4 H(+). The catalysed reaction is a 14alpha-methyl steroid + reduced [NADPH--hemoprotein reductase] + O2 = a 14alpha-hydroxymethyl steroid + oxidized [NADPH--hemoprotein reductase] + H2O + H(+). The enzyme catalyses a 14alpha-hydroxymethyl steroid + reduced [NADPH--hemoprotein reductase] + O2 = a 14alpha-formyl steroid + oxidized [NADPH--hemoprotein reductase] + 2 H2O + H(+). It catalyses the reaction a 14alpha-formyl steroid + reduced [NADPH--hemoprotein reductase] + O2 = a Delta(14) steroid + formate + oxidized [NADPH--hemoprotein reductase] + H2O + 2 H(+). It carries out the reaction lanosterol + reduced [NADPH--hemoprotein reductase] + O2 = 32-hydroxylanosterol + oxidized [NADPH--hemoprotein reductase] + H2O + H(+). The catalysed reaction is 32-hydroxylanosterol + reduced [NADPH--hemoprotein reductase] + O2 = 32-oxolanosterol + oxidized [NADPH--hemoprotein reductase] + 2 H2O + H(+). The enzyme catalyses 32-oxolanosterol + reduced [NADPH--hemoprotein reductase] + O2 = 4,4-dimethyl-5alpha-cholesta-8,14,24-trien-3beta-ol + formate + oxidized [NADPH--hemoprotein reductase] + H2O + 2 H(+). It catalyses the reaction 24,25-dihydrolanosterol + reduced [NADPH--hemoprotein reductase] + O2 = 32-hydroxy-24,25-dihydrolanosterol + oxidized [NADPH--hemoprotein reductase] + H2O + H(+). It carries out the reaction 32-hydroxy-24,25-dihydrolanosterol + reduced [NADPH--hemoprotein reductase] + O2 = 32-oxo-24,25-dihydrolanosterol + oxidized [NADPH--hemoprotein reductase] + 2 H2O + H(+). The catalysed reaction is 32-oxo-24,25-dihydrolanosterol + reduced [NADPH--hemoprotein reductase] + O2 = 4,4-dimethyl-8,14-cholestadien-3beta-ol + formate + oxidized [NADPH--hemoprotein reductase] + H2O + 2 H(+). The protein operates within steroid biosynthesis; zymosterol biosynthesis; zymosterol from lanosterol: step 1/6. Its activity is regulated as follows. Inhibited by ketoconazole. May also be inhibited to a lesser extent by propiconazole. In terms of biological role, sterol 14alpha-demethylase that plays a critical role in the cholesterol biosynthesis pathway, being cholesterol the major sterol component in deuterostome membranes as well as a precursor for steroid hormone synthesis. Cytochrome P450 monooxygenase that catalyzes the three-step oxidative removal of the 14alpha-methyl group (C-32) of sterols such as lanosterol (lanosta-8,24-dien-3beta-ol) and 24,25-dihydrolanosterol (DHL) in the form of formate, and converts the sterols to 4,4-dimethyl-5alpha-cholesta-8,14,24-trien-3beta-ol and 4,4-dimethyl-8,14-cholestadien-3beta-ol, respectively, which are intermediates of cholesterol biosynthesis. Can also demethylate substrates not intrinsic to deuterostomes, such as eburicol (24-methylene-24,25-dihydrolanosterol), but at a lower rate than DHL. This chain is Lanosterol 14-alpha demethylase, found in Danio rerio (Zebrafish).